A 359-amino-acid polypeptide reads, in one-letter code: Peptide chain release factor 1 (359 aa).

Residue Gln-234 is modified to N5-methylglutamine. The disordered stretch occupies residues 283–305 (SQKDAARAADRRAQVGSGDRSER).

The protein belongs to the prokaryotic/mitochondrial release factor family. In terms of processing, methylated by PrmC. Methylation increases the termination efficiency of RF1.

Its subcellular location is the cytoplasm. Functionally, peptide chain release factor 1 directs the termination of translation in response to the peptide chain termination codons UAG and UAA. This Methylobacterium sp. (strain 4-46) protein is Peptide chain release factor 1.